We begin with the raw amino-acid sequence, 648 residues long: Probable LRR receptor-like serine/threonine-protein kinase At4g30520 (648 aa).

An N-terminal signal peptide occupies residues 1–30 (MVVVTKKTMKIQIHLLYSFLFLCFSTLTLS). Topologically, residues 31 to 238 (SEPRNPEVEA…SSSGRRSNRL (208 aa)) are extracellular. N-linked (GlcNAc...) asparagine glycans are attached at residues asparagine 99 and asparagine 112. LRR repeat units follow at residues 100 to 125 (LTNLRQVSLQNNNISGKIPPELGFLP), 127 to 148 (LQTLDLSNNRFSGDIPVSIDQL), 149 to 172 (SSLQYLRLNNNSLSGPFPASLSQI), and 174 to 199 (HLSFLDLSYNNLSGPVPKFPARTFNV). Residues asparagine 158 and asparagine 184 are each glycosylated (N-linked (GlcNAc...) asparagine). The chain crosses the membrane as a helical span at residues 239 to 259 (AIALSVSLGSVVILVLALGSF). The Cytoplasmic portion of the chain corresponds to 260 to 648 (CWYRKKQRRL…SFAMELSGPR (389 aa)). Phosphothreonine is present on threonine 300. The Protein kinase domain occupies 303–582 (FSSKNILGAG…EGDGLAERWA (280 aa)). Residue 309 to 317 (LGAGGFGNV) participates in ATP binding. Phosphothreonine is present on threonine 326. Lysine 331 is a binding site for ATP. Serine 384 and serine 387 each carry phosphoserine. Aspartate 426 serves as the catalytic Proton acceptor. Threonine 459, threonine 460, and threonine 465 each carry phosphothreonine. Phosphotyrosine is present on tyrosine 473. At serine 475 the chain carries Phosphoserine. Threonine 476 is modified (phosphothreonine). A Phosphoserine modification is found at serine 480. Position 555 is a phosphothreonine (threonine 555).

The protein belongs to the protein kinase superfamily. Ser/Thr protein kinase family.

The protein resides in the cell membrane. The enzyme catalyses L-seryl-[protein] + ATP = O-phospho-L-seryl-[protein] + ADP + H(+). The catalysed reaction is L-threonyl-[protein] + ATP = O-phospho-L-threonyl-[protein] + ADP + H(+). This Arabidopsis thaliana (Mouse-ear cress) protein is Probable LRR receptor-like serine/threonine-protein kinase At4g30520.